Reading from the N-terminus, the 634-residue chain is DNA mismatch repair protein MutL (634 aa).

Residues 406-427 (HTHHNDTKGSVHTKSFSARSSS) are disordered.

It belongs to the DNA mismatch repair MutL/HexB family.

Functionally, this protein is involved in the repair of mismatches in DNA. It is required for dam-dependent methyl-directed DNA mismatch repair. May act as a 'molecular matchmaker', a protein that promotes the formation of a stable complex between two or more DNA-binding proteins in an ATP-dependent manner without itself being part of a final effector complex. This chain is DNA mismatch repair protein MutL, found in Anaplasma phagocytophilum (strain HZ).